A 245-amino-acid chain; its full sequence is Triosephosphate isomerase (245 aa).

4–6 (NWK) serves as a coordination point for substrate. The active-site Electrophile is histidine 91. Catalysis depends on glutamate 161, which acts as the Proton acceptor. Residues glycine 167, serine 207, and 228-229 (GG) each bind substrate.

This sequence belongs to the triosephosphate isomerase family. In terms of assembly, homodimer.

Its subcellular location is the cytoplasm. The enzyme catalyses D-glyceraldehyde 3-phosphate = dihydroxyacetone phosphate. Its pathway is carbohydrate biosynthesis; gluconeogenesis. It functions in the pathway carbohydrate degradation; glycolysis; D-glyceraldehyde 3-phosphate from glycerone phosphate: step 1/1. Functionally, involved in the gluconeogenesis. Catalyzes stereospecifically the conversion of dihydroxyacetone phosphate (DHAP) to D-glyceraldehyde-3-phosphate (G3P). This chain is Triosephosphate isomerase, found in Chlorobaculum tepidum (strain ATCC 49652 / DSM 12025 / NBRC 103806 / TLS) (Chlorobium tepidum).